A 329-amino-acid chain; its full sequence is Flotillin-like protein FloA (329 aa).

2 helical membrane-spanning segments follow: residues 6–26 and 27–47; these read FIVI…FVPI and GLWI…LVGM.

The protein belongs to the flotillin-like FloA family. In terms of assembly, homooligomerizes.

The protein localises to the cell membrane. It is found in the membrane raft. Found in functional membrane microdomains (FMM) that may be equivalent to eukaryotic membrane rafts. FMMs are highly dynamic and increase in number as cells age. Flotillins are thought to be important factors in membrane fluidity. The protein is Flotillin-like protein FloA of Staphylococcus aureus (strain JH1).